Reading from the N-terminus, the 110-residue chain is Protein SPIRAL1-like 2 (110 aa).

Positions 28-110 are disordered; that stretch reads AVNKTPAETE…LDYLFGGGSN (83 aa). Over residues 40–52 the composition is skewed to low complexity; sequence AHAPPTQAAAANA. The segment covering 63–82 has biased composition (polar residues); it reads LNSNSANNYMRAEGQNTGNF. At serine 67 the chain carries Phosphoserine. Residues 95–110 are compositionally biased toward gly residues; sequence PGGGSSLDYLFGGGSN.

This sequence belongs to the SPIRAL1 family. Ubiquitous.

Functionally, acts redundantly with SPR1 in maintaining the cortical microtubules organization essential for anisotropic cell growth. This Arabidopsis thaliana (Mouse-ear cress) protein is Protein SPIRAL1-like 2 (SP1L2).